Consider the following 240-residue polypeptide: Orotidine 5'-phosphate decarboxylase (240 aa).

Substrate-binding positions include aspartate 12, lysine 34, 62–71 (DMKLFDIGNT), threonine 117, arginine 180, glutamine 189, glycine 209, and arginine 210. The Proton donor role is filled by lysine 64.

The protein belongs to the OMP decarboxylase family. Type 1 subfamily. Homodimer.

The enzyme catalyses orotidine 5'-phosphate + H(+) = UMP + CO2. Its pathway is pyrimidine metabolism; UMP biosynthesis via de novo pathway; UMP from orotate: step 2/2. In terms of biological role, catalyzes the decarboxylation of orotidine 5'-monophosphate (OMP) to uridine 5'-monophosphate (UMP). The polypeptide is Orotidine 5'-phosphate decarboxylase (Ruegeria pomeroyi (strain ATCC 700808 / DSM 15171 / DSS-3) (Silicibacter pomeroyi)).